Consider the following 61-residue polypeptide: Chromatin protein Cren7 (61 aa).

It belongs to the Cren7 family. As to quaternary structure, monomer. Post-translationally, methylated at multiple sites, to varying extents.

The protein resides in the chromosome. It localises to the cytoplasm. In terms of biological role, a chromatin protein, binds double-stranded DNA without sequence specificity. Constrains negative DNA supercoils. The protein is Chromatin protein Cren7 of Caldivirga maquilingensis (strain ATCC 700844 / DSM 13496 / JCM 10307 / IC-167).